Reading from the N-terminus, the 416-residue chain is Adenylosuccinate synthetase (416 aa).

Residues 13–19 (GDEGKGK) and 41–43 (GHT) each bind GTP. Residue Asp14 is the Proton acceptor of the active site. Residues Asp14 and Gly41 each coordinate Mg(2+). IMP contacts are provided by residues 14-17 (DEGK), 39-42 (NAGH), Thr126, Arg140, Gln220, Thr235, and Arg299. Catalysis depends on His42, which acts as the Proton donor. 295-301 (TTTGRRR) contributes to the substrate binding site. Residues Arg301, 327–329 (KLD), and 405–407 (STS) contribute to the GTP site.

This sequence belongs to the adenylosuccinate synthetase family. In terms of assembly, homodimer. It depends on Mg(2+) as a cofactor.

Its subcellular location is the cytoplasm. The enzyme catalyses IMP + L-aspartate + GTP = N(6)-(1,2-dicarboxyethyl)-AMP + GDP + phosphate + 2 H(+). The protein operates within purine metabolism; AMP biosynthesis via de novo pathway; AMP from IMP: step 1/2. Plays an important role in the de novo pathway of purine nucleotide biosynthesis. Catalyzes the first committed step in the biosynthesis of AMP from IMP. The polypeptide is Adenylosuccinate synthetase (Campylobacter curvus (strain 525.92)).